The following is a 142-amino-acid chain: Lipoprotein MlpI (142 aa).

Residues 1 to 17 (MKIINILFCLFLLMLNS) form the signal peptide. Cys-18 carries N-palmitoyl cysteine lipidation. Residue Cys-18 is the site of S-diacylglycerol cysteine attachment. The interval 22–54 (DTNTSQTKSRQKRDLTQKEATQEKPKSKEDLLR) is disordered. Residues 33–54 (KRDLTQKEATQEKPKSKEDLLR) are compositionally biased toward basic and acidic residues.

Belongs to the Multicopy lipoprotein (Mlp) family.

Its subcellular location is the cell outer membrane. Functionally, an outer membrane protein that may participate in pathogenesis. Some human Lyme disease patients have antibodies against this protein. The Mlp proteins probably undergo intragenic recombination, generating new alleles. In Borreliella burgdorferi (strain ATCC 35210 / DSM 4680 / CIP 102532 / B31) (Borrelia burgdorferi), this protein is Lipoprotein MlpI.